The following is an 83-amino-acid chain: Disintegrin bitistatin (83 aa).

The region spanning 2-83 (PPVCGNKILE…GKSSDCPWNH (82 aa)) is the Disintegrin domain. 10 disulfides stabilise this stretch: C5–C24, C5–C34, C16–C29, C16–C34, C18–C24, C18–C29, C28–C51, C42–C48, C47–C72, and C60–C79. A Cell attachment site motif is present at residues 64-66 (RGD).

Belongs to the venom metalloproteinase (M12B) family. P-II subfamily. P-IIa sub-subfamily. Monomer. Exists in 3 forms in the venom. The forms A, B, and C are present at 53%, 32% and 15%. The forms A and B differ by their disulfide bond pattern in the N-terminal part. No information is known about form C. In terms of tissue distribution, expressed by the venom gland.

The protein localises to the secreted. Functionally, inhibits fibrinogen interaction with platelets. Acts by binding to alpha-IIb/beta-3 (ITGA2B/ITGB3) on the platelet surface and inhibits aggregation induced by ADP, thrombin, platelet-activating factor and collagen. The polypeptide is Disintegrin bitistatin (Bitis arietans (African puff adder)).